Reading from the N-terminus, the 429-residue chain is Adenylosuccinate synthetase (429 aa).

Residues 13 to 19 and 41 to 43 each bind GTP; these read GDEGKGK and GHT. The active-site Proton acceptor is the aspartate 14. Aspartate 14 and glycine 41 together coordinate Mg(2+). IMP-binding positions include 14 to 17, 39 to 42, threonine 130, arginine 144, glutamine 224, threonine 239, and arginine 303; these read DEGK and NAGH. Histidine 42 acts as the Proton donor in catalysis. Residue 299–305 coordinates substrate; sequence ATTGRAR. GTP is bound by residues arginine 305, 331-333, and 412-414; these read KLD and STG.

It belongs to the adenylosuccinate synthetase family. In terms of assembly, homodimer. The cofactor is Mg(2+).

It is found in the cytoplasm. The catalysed reaction is IMP + L-aspartate + GTP = N(6)-(1,2-dicarboxyethyl)-AMP + GDP + phosphate + 2 H(+). It participates in purine metabolism; AMP biosynthesis via de novo pathway; AMP from IMP: step 1/2. In terms of biological role, plays an important role in the de novo pathway of purine nucleotide biosynthesis. Catalyzes the first committed step in the biosynthesis of AMP from IMP. The chain is Adenylosuccinate synthetase from Psychrobacter sp. (strain PRwf-1).